Reading from the N-terminus, the 64-residue chain is Large ribosomal subunit protein bL33 (64 aa).

Positions 16-25 (EARTSSEPRR) are enriched in basic and acidic residues. Residues 16–39 (EARTSSEPRRSNGISRYTTEKNKR) form a disordered region.

The protein belongs to the bacterial ribosomal protein bL33 family.

The chain is Large ribosomal subunit protein bL33 from Prochlorococcus marinus (strain MIT 9515).